Reading from the N-terminus, the 126-residue chain is Non-specific lipid-transfer protein 15 (126 aa).

Residues 1–22 (MSKSIFVVCITLLVVLSPTLNA) form the signal peptide. Cystine bridges form between C34–C80, C45–C57, C58–C100, and C78–C114.

The protein belongs to the plant LTP family.

Its function is as follows. Plant non-specific lipid-transfer proteins transfer phospholipids as well as galactolipids across membranes. May play a role in wax or cutin deposition in the cell walls of expanding epidermal cells and certain secretory tissues. This Arabidopsis thaliana (Mouse-ear cress) protein is Non-specific lipid-transfer protein 15 (LTP15).